The chain runs to 137 residues: Ribosomal RNA large subunit methyltransferase H (137 aa).

Residues Leu56, Gly85, and 104–109 contribute to the S-adenosyl-L-methionine site; that span reads LSPLTF.

The protein belongs to the RNA methyltransferase RlmH family. As to quaternary structure, homodimer.

It is found in the cytoplasm. It catalyses the reaction pseudouridine(1915) in 23S rRNA + S-adenosyl-L-methionine = N(3)-methylpseudouridine(1915) in 23S rRNA + S-adenosyl-L-homocysteine + H(+). Its function is as follows. Specifically methylates the pseudouridine at position 1915 (m3Psi1915) in 23S rRNA. This is Ribosomal RNA large subunit methyltransferase H from Prochlorococcus marinus (strain MIT 9515).